The primary structure comprises 1495 residues: Pregnancy zone protein (1495 aa).

The signal sequence occupies residues 1-24; that stretch reads MRRNQLPTPAFLLLFLLLPRDATT. An intrachain disulfide couples C48 to C86. N-linked (GlcNAc...) asparagine glycosylation is found at N55 and N157. 2 cysteine pairs are disulfide-bonded: C249-C298 and C267-C286. 3 N-linked (GlcNAc...) asparagine glycosylation sites follow: N382, N405, and N412. Cysteines 469 and 562 form a disulfide. N-linked (GlcNAc...) asparagine glycosylation is present at N568. 6 disulfide bridges follow: C594–C783, C642–C689, C833–C861, C859–C895, C933–C1339, and C1092–C1140. Positions 686–744 are bait region; the sequence is PRFCQEFQHYPAMGGVAPQALAVAASGPGSSFRAMGVPMMGLDYSDEINQVVEVRETVR. Residues N881 and N942 are each glycosylated (N-linked (GlcNAc...) asparagine). Residues 984–987 constitute a cross-link (isoglutamyl cysteine thioester (Cys-Gln)); the sequence is CGEQ. N-linked (GlcNAc...) asparagine glycosylation occurs at N1003. Residues N1385 and N1443 are each glycosylated (N-linked (GlcNAc...) asparagine).

The protein belongs to the protease inhibitor I39 (alpha-2-macroglobulin) family. As to expression, highest expression in liver, medium expression in ovary, heart and stomach. Low expression in lung, kidney and uterus. Protein found in plasma.

Its subcellular location is the secreted. In terms of biological role, is able to inhibit all four classes of proteinases by a unique 'trapping' mechanism. This protein has a peptide stretch, called the 'bait region' which contains specific cleavage sites for different proteinases. When a proteinase cleaves the bait region, a conformational change is induced in the protein which traps the proteinase. The entrapped enzyme remains active against low molecular weight substrates (activity against high molecular weight substrates is greatly reduced). Following cleavage in the bait region, a thioester bond is hydrolyzed and mediates the covalent binding of the protein to the proteinase. The sequence is that of Pregnancy zone protein (Pzp) from Mus musculus (Mouse).